Reading from the N-terminus, the 1569-residue chain is Pentafunctional AROM polypeptide (1569 aa).

The 3-dehydroquinate synthase stretch occupies residues 1–382 (MAEAKKPGPE…HEPRASVVDD (382 aa)). Residues 49–51 (DTN), 84–87 (EASK), 115–117 (GGV), and Asp120 contribute to the NAD(+) site. Arg131 provides a ligand contact to 7-phospho-2-dehydro-3-deoxy-D-arabino-heptonate. NAD(+) is bound at residue 140 to 141 (TT). Residues Asp147 and Lys153 each coordinate 7-phospho-2-dehydro-3-deoxy-D-arabino-heptonate. NAD(+) is bound at residue Lys162. Position 163 (Asn163) interacts with 7-phospho-2-dehydro-3-deoxy-D-arabino-heptonate. NAD(+)-binding positions include 180 to 183 (FLET) and Asn191. Zn(2+) is bound at residue Glu195. 7-phospho-2-dehydro-3-deoxy-D-arabino-heptonate-binding positions include 195–198 (EVVK) and Lys248. The Proton acceptor; for 3-dehydroquinate synthase activity role is filled by Glu258. 7-phospho-2-dehydro-3-deoxy-D-arabino-heptonate contacts are provided by residues 262–266 (RNLLN) and His269. Residue His269 participates in Zn(2+) binding. His273 acts as the Proton acceptor; for 3-dehydroquinate synthase activity in catalysis. The 7-phospho-2-dehydro-3-deoxy-D-arabino-heptonate site is built by His285 and Lys354. His285 serves as a coordination point for Zn(2+). The EPSP synthase stretch occupies residues 395–837 (VTPGVPSNLD…WDILSQAFKV (443 aa)). Cys819 functions as the For EPSP synthase activity in the catalytic mechanism. The segment at 859–1053 (ERSVFIIGMR…MEKDHSFFVS (195 aa)) is shikimate kinase. Position 866 to 873 (866 to 873 (GMRGAGKT)) interacts with ATP. The interval 1054-1267 (LTVPDVSEAA…AAPGQMSAAE (214 aa)) is 3-dehydroquinase. Catalysis depends on His1170, which acts as the Proton acceptor; for 3-dehydroquinate dehydratase activity. Lys1198 serves as the catalytic Schiff-base intermediate with substrate; for 3-dehydroquinate dehydratase activity. The segment at 1280–1569 (PCNFYLFGKP…RDARSAVLGL (290 aa)) is shikimate dehydrogenase.

It in the N-terminal section; belongs to the sugar phosphate cyclases superfamily. Dehydroquinate synthase family. This sequence in the 2nd section; belongs to the EPSP synthase family. In the 3rd section; belongs to the shikimate kinase family. The protein in the 4th section; belongs to the type-I 3-dehydroquinase family. It in the C-terminal section; belongs to the shikimate dehydrogenase family. As to quaternary structure, homodimer. Requires Zn(2+) as cofactor.

It is found in the cytoplasm. It carries out the reaction 7-phospho-2-dehydro-3-deoxy-D-arabino-heptonate = 3-dehydroquinate + phosphate. The catalysed reaction is 3-dehydroquinate = 3-dehydroshikimate + H2O. The enzyme catalyses shikimate + NADP(+) = 3-dehydroshikimate + NADPH + H(+). It catalyses the reaction shikimate + ATP = 3-phosphoshikimate + ADP + H(+). It carries out the reaction 3-phosphoshikimate + phosphoenolpyruvate = 5-O-(1-carboxyvinyl)-3-phosphoshikimate + phosphate. The protein operates within metabolic intermediate biosynthesis; chorismate biosynthesis; chorismate from D-erythrose 4-phosphate and phosphoenolpyruvate: step 2/7. It functions in the pathway metabolic intermediate biosynthesis; chorismate biosynthesis; chorismate from D-erythrose 4-phosphate and phosphoenolpyruvate: step 3/7. Its pathway is metabolic intermediate biosynthesis; chorismate biosynthesis; chorismate from D-erythrose 4-phosphate and phosphoenolpyruvate: step 4/7. It participates in metabolic intermediate biosynthesis; chorismate biosynthesis; chorismate from D-erythrose 4-phosphate and phosphoenolpyruvate: step 5/7. The protein operates within metabolic intermediate biosynthesis; chorismate biosynthesis; chorismate from D-erythrose 4-phosphate and phosphoenolpyruvate: step 6/7. Functionally, the AROM polypeptide catalyzes 5 consecutive enzymatic reactions in prechorismate polyaromatic amino acid biosynthesis. This chain is Pentafunctional AROM polypeptide, found in Fusarium vanettenii (strain ATCC MYA-4622 / CBS 123669 / FGSC 9596 / NRRL 45880 / 77-13-4) (Fusarium solani subsp. pisi).